The sequence spans 311 residues: Malate dehydrogenase (311 aa).

NAD(+)-binding positions include 7–13 (GAAGGIG) and Asp-34. The substrate site is built by Arg-81 and Arg-87. Residues Asn-94 and 117–119 (ITN) each bind NAD(+). Substrate contacts are provided by Asn-119 and Arg-153. Residue His-177 is the Proton acceptor of the active site. Met-227 lines the NAD(+) pocket.

The protein belongs to the LDH/MDH superfamily. MDH type 1 family. As to quaternary structure, homodimer.

It carries out the reaction (S)-malate + NAD(+) = oxaloacetate + NADH + H(+). Functionally, catalyzes the reversible oxidation of malate to oxaloacetate. The polypeptide is Malate dehydrogenase (Vibrio atlanticus (strain LGP32) (Vibrio splendidus (strain Mel32))).